A 496-amino-acid polypeptide reads, in one-letter code: 2,3-bisphosphoglycerate-independent phosphoglycerate mutase (496 aa).

Asp-12 and Ser-62 together coordinate Mn(2+). The Phosphoserine intermediate role is filled by Ser-62. Substrate is bound by residues His-121, 150–151 (RD), Arg-181, Arg-187, 252–255 (RNDR), and Lys-317. Positions 384, 388, 425, 426, and 444 each coordinate Mn(2+).

This sequence belongs to the BPG-independent phosphoglycerate mutase family. As to quaternary structure, monomer. Mn(2+) is required as a cofactor.

The enzyme catalyses (2R)-2-phosphoglycerate = (2R)-3-phosphoglycerate. It functions in the pathway carbohydrate degradation; glycolysis; pyruvate from D-glyceraldehyde 3-phosphate: step 3/5. Functionally, catalyzes the interconversion of 2-phosphoglycerate and 3-phosphoglycerate. The chain is 2,3-bisphosphoglycerate-independent phosphoglycerate mutase from Anaplasma phagocytophilum (strain HZ).